The following is a 163-amino-acid chain: Transcription antitermination protein NusB (163 aa).

A disordered region spans residues 1–21 (MTTFLSDSEHPQDVKAPPKSA).

This sequence belongs to the NusB family.

Involved in transcription antitermination. Required for transcription of ribosomal RNA (rRNA) genes. Binds specifically to the boxA antiterminator sequence of the ribosomal RNA (rrn) operons. The protein is Transcription antitermination protein NusB of Dechloromonas aromatica (strain RCB).